The following is a 317-amino-acid chain: sn-1-specific diacylglycerol lipase ABHD11 (317 aa).

The N-terminal 20 residues, 1–20 (MSNFAMSALCRVFTRGAPCG), are a transit peptide targeting the mitochondrion. The AB hydrolase-1 domain occupies 69 to 304 (PLVFLHGLFG…ASHWIHADKP (236 aa)). Active-site charge relay system residues include serine 142, glutamate 238, and histidine 297.

The protein belongs to the AB hydrolase superfamily. Phosphorylated.

It localises to the mitochondrion. It is found in the mitochondrion matrix. It catalyses the reaction 1-octadecanoyl-2-(5Z,8Z,11Z,14Z-eicosatetraenoyl)-sn-glycerol + H2O = 2-(5Z,8Z,11Z,14Z-eicosatetraenoyl)-glycerol + octadecanoate + H(+). The enzyme catalyses a 1,2-diacyl-sn-glycerol + H2O = a 2-acylglycerol + a fatty acid + H(+). It carries out the reaction a 1,3-diacyl-sn-glycerol + H2O = a 1-acyl-sn-glycerol + a fatty acid + H(+). The catalysed reaction is 1-octadecanoyl-2-(9Z-octadecenoyl)-sn-glycerol + H2O = 2-(9Z-octadecenoyl)-glycerol + octadecanoate + H(+). It catalyses the reaction 1-octadecanoyl-2-(4Z,7Z,10Z,13Z,16Z,19Z-docosahexaenoyl)-sn-glycerol + H2O = 2-(4Z,7Z,10Z,13Z,16Z,19Z-docosahexaenoyl)-glycerol + octadecanoate + H(+). The enzyme catalyses 1,2-didecanoylglycerol + H2O = decanoylglycerol + decanoate + H(+). Catalyzes the hydrolysis of diacylglycerol in vitro and may function as a key regulator in lipid metabolism, namely by regulating the intracellular levels of diacylglycerol. 1,2-diacyl-sn-glycerols are the preferred substrate over 1,3-diacyl-sn-glycerols. The enzyme hydrolyzes stearate in preference to palmitate from the sn-1 position of 1,2-diacyl-sn-glycerols. The protein is sn-1-specific diacylglycerol lipase ABHD11 of Danio rerio (Zebrafish).